We begin with the raw amino-acid sequence, 208 residues long: Small ribosomal subunit protein uS4B (208 aa).

The region spanning 95 to 160 (KRLDNVVFRL…NQVYMAAKQA (66 aa)) is the S4 RNA-binding domain.

It belongs to the universal ribosomal protein uS4 family. In terms of assembly, part of the 30S ribosomal subunit. Contacts protein S5. The interaction surface between S4 and S5 is involved in control of translational fidelity.

One of the primary rRNA binding proteins, it binds directly to 16S rRNA where it nucleates assembly of the body of the 30S subunit. Functionally, with S5 and S12 plays an important role in translational accuracy. This Bdellovibrio bacteriovorus (strain ATCC 15356 / DSM 50701 / NCIMB 9529 / HD100) protein is Small ribosomal subunit protein uS4B.